A 396-amino-acid chain; its full sequence is Cystathionine beta-lyase (396 aa).

Lys211 is modified (N6-(pyridoxal phosphate)lysine).

The protein belongs to the trans-sulfuration enzymes family. As to quaternary structure, homotetramer. The cofactor is pyridoxal 5'-phosphate.

It localises to the cytoplasm. It catalyses the reaction L,L-cystathionine + H2O = L-homocysteine + pyruvate + NH4(+). The enzyme catalyses an S-substituted L-cysteine + H2O = a thiol + pyruvate + NH4(+). It functions in the pathway amino-acid biosynthesis; L-methionine biosynthesis via de novo pathway; L-homocysteine from L-cystathionine: step 1/1. Catalyzes the cleavage of cystathionine to homocysteine, pyruvate and ammonia during methionine biosynthesis. In Haemophilus influenzae (strain ATCC 51907 / DSM 11121 / KW20 / Rd), this protein is Cystathionine beta-lyase (metC).